Consider the following 264-residue polypeptide: Phosphoribosylaminoimidazole-succinocarboxamide synthase 1 (264 aa).

Belongs to the SAICAR synthetase family.

It carries out the reaction 5-amino-1-(5-phospho-D-ribosyl)imidazole-4-carboxylate + L-aspartate + ATP = (2S)-2-[5-amino-1-(5-phospho-beta-D-ribosyl)imidazole-4-carboxamido]succinate + ADP + phosphate + 2 H(+). The protein operates within purine metabolism; IMP biosynthesis via de novo pathway; 5-amino-1-(5-phospho-D-ribosyl)imidazole-4-carboxamide from 5-amino-1-(5-phospho-D-ribosyl)imidazole-4-carboxylate: step 1/2. The polypeptide is Phosphoribosylaminoimidazole-succinocarboxamide synthase 1 (purC1) (Mesorhizobium japonicum (strain LMG 29417 / CECT 9101 / MAFF 303099) (Mesorhizobium loti (strain MAFF 303099))).